The chain runs to 303 residues: tRNA pseudouridine synthase A (303 aa).

Aspartate 59 functions as the Nucleophile in the catalytic mechanism. Position 128 (tyrosine 128) interacts with substrate.

The protein belongs to the tRNA pseudouridine synthase TruA family. As to quaternary structure, homodimer.

It catalyses the reaction uridine(38/39/40) in tRNA = pseudouridine(38/39/40) in tRNA. Its function is as follows. Formation of pseudouridine at positions 38, 39 and 40 in the anticodon stem and loop of transfer RNAs. This chain is tRNA pseudouridine synthase A, found in Bifidobacterium longum (strain DJO10A).